The sequence spans 457 residues: Fibrinogen C domain-containing protein 1-A (457 aa).

A disordered region spans residues 1 to 20 (MGSDRWKNIGGTPQMEDSAQ). At 1–33 (MGSDRWKNIGGTPQMEDSAQEKTQRKGCGYILC) the chain is on the cytoplasmic side. Residues 34–54 (TVLLSVAVLLAVTVTGAVLFM) traverse the membrane as a helical; Signal-anchor for type II membrane protein segment. Residues 55–457 (NHYHAPSTEP…MKIRPQREEN (403 aa)) lie on the Extracellular side of the membrane. The tract at residues 216-235 (ADLQRAPSRNSRPRGCANGS) is disordered. One can recognise a Fibrinogen C-terminal domain in the interval 231-454 (CANGSKPRDC…FTEMKIRPQR (224 aa)). N233 carries N-linked (GlcNAc...) asparagine glycosylation. The cysteines at positions 240 and 269 are disulfide-linked. The N-linked (GlcNAc...) asparagine glycan is linked to N336. Ca(2+) is bound by residues D389 and D391. A disulfide bond links C397 and C410.

Homotetramer; disulfide-linked.

The protein resides in the membrane. Acetyl group-binding receptor which shows a calcium-dependent binding to acetylated structures such as chitin, some N-acetylated carbohydrates, and amino acids. This chain is Fibrinogen C domain-containing protein 1-A (fibcd1-a), found in Xenopus laevis (African clawed frog).